The sequence spans 238 residues: 1-(5-phosphoribosyl)-5-[(5-phosphoribosylamino)methylideneamino] imidazole-4-carboxamide isomerase (238 aa).

Catalysis depends on aspartate 8, which acts as the Proton acceptor. The active-site Proton donor is aspartate 129.

The protein belongs to the HisA/HisF family.

The protein resides in the cytoplasm. The enzyme catalyses 1-(5-phospho-beta-D-ribosyl)-5-[(5-phospho-beta-D-ribosylamino)methylideneamino]imidazole-4-carboxamide = 5-[(5-phospho-1-deoxy-D-ribulos-1-ylimino)methylamino]-1-(5-phospho-beta-D-ribosyl)imidazole-4-carboxamide. It participates in amino-acid biosynthesis; L-histidine biosynthesis; L-histidine from 5-phospho-alpha-D-ribose 1-diphosphate: step 4/9. This Jannaschia sp. (strain CCS1) protein is 1-(5-phosphoribosyl)-5-[(5-phosphoribosylamino)methylideneamino] imidazole-4-carboxamide isomerase.